A 488-amino-acid polypeptide reads, in one-letter code: GTPase Der (488 aa).

2 EngA-type G domains span residues 3-166 (PVVA…AEAM) and 199-372 (IKLA…DSAT). GTP is bound by residues 9–16 (GRPNVGKS), 56–60 (DTGGI), 118–121 (NKVD), 205–212 (GKPNVGKS), 252–256 (DTAGV), and 317–320 (NKWD). Residues 373–457 (RRVSTSMLTR…PIQLRFQEGD (85 aa)) enclose the KH-like domain. Residues 469–488 (MSQERRRKRALSHIKDRKTK) form a disordered region. A compositionally biased stretch (basic residues) spans 473–488 (RRRKRALSHIKDRKTK).

The protein belongs to the TRAFAC class TrmE-Era-EngA-EngB-Septin-like GTPase superfamily. EngA (Der) GTPase family. As to quaternary structure, associates with the 50S ribosomal subunit.

Functionally, GTPase that plays an essential role in the late steps of ribosome biogenesis. In Shewanella sp. (strain W3-18-1), this protein is GTPase Der.